The sequence spans 564 residues: Dihydroxy-acid dehydratase (564 aa).

Residue aspartate 80 participates in Mg(2+) binding. Cysteine 121 is a binding site for [2Fe-2S] cluster. 2 residues coordinate Mg(2+): aspartate 122 and lysine 123. At lysine 123 the chain carries N6-carboxylysine. Residue cysteine 194 coordinates [2Fe-2S] cluster. Glutamate 447 contacts Mg(2+). Residue serine 473 is the Proton acceptor of the active site.

It belongs to the IlvD/Edd family. In terms of assembly, homodimer. The cofactor is [2Fe-2S] cluster. Mg(2+) serves as cofactor.

It carries out the reaction (2R)-2,3-dihydroxy-3-methylbutanoate = 3-methyl-2-oxobutanoate + H2O. The catalysed reaction is (2R,3R)-2,3-dihydroxy-3-methylpentanoate = (S)-3-methyl-2-oxopentanoate + H2O. It participates in amino-acid biosynthesis; L-isoleucine biosynthesis; L-isoleucine from 2-oxobutanoate: step 3/4. It functions in the pathway amino-acid biosynthesis; L-valine biosynthesis; L-valine from pyruvate: step 3/4. In terms of biological role, functions in the biosynthesis of branched-chain amino acids. Catalyzes the dehydration of (2R,3R)-2,3-dihydroxy-3-methylpentanoate (2,3-dihydroxy-3-methylvalerate) into 2-oxo-3-methylpentanoate (2-oxo-3-methylvalerate) and of (2R)-2,3-dihydroxy-3-methylbutanoate (2,3-dihydroxyisovalerate) into 2-oxo-3-methylbutanoate (2-oxoisovalerate), the penultimate precursor to L-isoleucine and L-valine, respectively. The sequence is that of Dihydroxy-acid dehydratase from Listeria monocytogenes serotype 4a (strain HCC23).